The chain runs to 721 residues: Rho GTPase-activating protein gacY (721 aa).

Residues 1–325 (MDSSFKRASF…PQQPQQQQST (325 aa)) form a disordered region. Positions 17 to 33 (NIDNINEMNNNNMNTAP) are enriched in low complexity. Over residues 34–44 (APAPAPIPTPQ) the composition is skewed to pro residues. The span at 146–168 (DNNNNGNNNNNNNNNDNNNNNNN) shows a compositional bias: low complexity. Over residues 169 to 181 (NDDDDEDEDDDEY) the composition is skewed to acidic residues. Polar residues-rich tracts occupy residues 182 to 202 (SNVSAPSWNSVLSKAKTNTMN) and 219 to 240 (KNDSGGENSANTTSEDGSSSRR). Residues 308 to 323 (QQQQQPQQPQQPQQQQ) show a composition bias toward low complexity. The 158-residue stretch at 363 to 520 (KSQRFPEIEA…AIMMHRPAGK (158 aa)) folds into the CRAL-TRIO domain. A Rho-GAP domain is found at 528 to 719 (APLEDVINRP…LILDNINILF (192 aa)).

The protein resides in the cytoplasm. Rho GTPase-activating protein involved in the signal transduction pathway. In Dictyostelium discoideum (Social amoeba), this protein is Rho GTPase-activating protein gacY (gacY).